We begin with the raw amino-acid sequence, 361 residues long: MAGNSIGQIFRVTTFGESHGVALGCIVDGVPPGIPLTEADLQHDLDRRRPGTSRYTTQRREPDQVRILSGVFEGVTTGTSIGLIIENTDQRSQDYGAIKDVFRPGHADYTYEQKYGVRDYRGGGRSSARETAMRVAAGAIAKKYLQQKFGVQVRGYLAQIGDVVCELKDWEQVEQNPFFCPDPDKLEALDELMRALKKEGDSIGAKVSVVAENVPVGLGEPVFDRLDADLAHALMSINAVKGVEIGDGFSVVTKRGSENRDEITPEGFQSNHAGGILGGISSGQAVIAHLALKPTSSIMVPGRTINRQGEAVEMVTRGRHDPCVGIRAVPIAEAMMAIVLMDHLLRQRAQNGDVVSNVPRW.

The disordered stretch occupies residues 37–59; it reads TEADLQHDLDRRRPGTSRYTTQR. Residues 40–49 are compositionally biased toward basic and acidic residues; it reads DLQHDLDRRR. The NADP(+) site is built by arginine 48 and arginine 54. Residues 125–127, 238–239, glycine 278, 293–297, and arginine 319 contribute to the FMN site; these read RSS, NA, and KPTSS.

The protein belongs to the chorismate synthase family. Homotetramer. FMNH2 serves as cofactor.

It catalyses the reaction 5-O-(1-carboxyvinyl)-3-phosphoshikimate = chorismate + phosphate. It functions in the pathway metabolic intermediate biosynthesis; chorismate biosynthesis; chorismate from D-erythrose 4-phosphate and phosphoenolpyruvate: step 7/7. In terms of biological role, catalyzes the anti-1,4-elimination of the C-3 phosphate and the C-6 proR hydrogen from 5-enolpyruvylshikimate-3-phosphate (EPSP) to yield chorismate, which is the branch point compound that serves as the starting substrate for the three terminal pathways of aromatic amino acid biosynthesis. This reaction introduces a second double bond into the aromatic ring system. The sequence is that of Chorismate synthase from Serratia proteamaculans (strain 568).